Here is a 237-residue protein sequence, read N- to C-terminus: Uridylate kinase (237 aa).

Residue 9-12 (KLSG) participates in ATP binding. Gly-51 contacts UMP. 2 residues coordinate ATP: Gly-52 and Arg-56. Residues Asp-71 and 132-139 (CGNPFFTT) each bind UMP. Residues Thr-159, Tyr-165, and Asp-168 each contribute to the ATP site.

It belongs to the UMP kinase family. Homohexamer.

The protein localises to the cytoplasm. It catalyses the reaction UMP + ATP = UDP + ADP. The protein operates within pyrimidine metabolism; CTP biosynthesis via de novo pathway; UDP from UMP (UMPK route): step 1/1. Inhibited by UTP. Catalyzes the reversible phosphorylation of UMP to UDP. The protein is Uridylate kinase of Prochlorococcus marinus (strain MIT 9313).